The primary structure comprises 3678 residues: Dystrophin (3678 aa).

Residues 1-240 (MLWWEEVEDC…YITSLFQVLP (240 aa)) form an actin-binding region. Calponin-homology (CH) domains lie at 15 to 119 (DVQK…LHWQ) and 134 to 240 (TNSE…QVLP). An ANK2- and ANK-3 binding region spans residues 63-72 (PKEKGSTRVH). Positions 313–333 (DSTQSPYPSQHLEAPRDKSLD) are disordered. Spectrin repeat units lie at residues 341–449 (VNLD…KLHK), 450–558 (VLMD…VLQD), 561–669 (LKWQ…QISQ), 721–830 (ELRK…WLEY), 832–936 (TNII…ELQT), 945–1047 (RYQE…KLEE), 1050–1156 (NKLR…ALKA), 1159–1265 (DKTV…TLEE), 1268–1369 (ACWH…LLEQ), 1370–1465 (SIQS…LFQK), 1470–1570 (EQRL…QLEK), 1573–1678 (KLSR…LLLE), 1681–1780 (KHME…KASI), 1781–1876 (PLKE…KALE), 1879–1981 (HQWY…TLHE), 1994–2103 (DVSY…RFDR), 2106–2210 (EKWR…RIEE), 2213–2318 (NVLS…ELEV), 2319–2416 (HLKD…LRTK), 2468–2570 (FNRA…QLNE), 2573–2679 (KDST…ALEE), 2682–2795 (RLLQ…HLEA), 2801–2923 (KRLH…RKID), and 2928–3033 (RLQE…QLHE). The tract at residues 1417–1915 (SDLTSHEISL…PEPRDERKLK (499 aa)) is interaction with SYNM. In terms of domain architecture, WW spans 3048–3081 (TSVQGPWERAISPNKVPYYINHETQTTCWDHPKM). Residues 3051–3401 (QGPWERAISP…TVLEGDNMET (351 aa)) are interaction with SYNM. The ZZ-type; degenerate zinc-finger motif lies at 3301–3357 (KHQAKCNICKECPIIGFRYRSLKHFNYDICQSCFFSGRVAKGHKMHYPMVEYCTPTT). Positions 3306, 3309, 3330, and 3333 each coordinate Zn(2+). Residues 3459 to 3511 (DDEHLLIQHYCQSLNQDSPLSQPRSPAQILISLESEERGELERILADLEEENR) form a binds to SNTB1 region. 3 positions are modified to phosphoserine: serine 3476, serine 3483, and serine 3493. Disordered regions lie at residues 3521–3547 (KQQHEHKGLSPLPSPPEMMPTSPQSPR) and 3596–3678 (EAKV…EDTM). Polar residues-rich tracts occupy residues 3600–3619 (NGTTVSSPSTSLQRSDSSQP) and 3655–3665 (QLNNSFPSSRG). Phosphoserine is present on residues serine 3605, serine 3606, serine 3610, serine 3616, serine 3617, and serine 3659.

In terms of assembly, interacts with SYNM. Interacts with the syntrophins SNTG1 and SNTG2. Interacts with KRT19. Component of the dystrophin-associated glycoprotein complex which is composed of three subcomplexes: a cytoplasmic complex comprised of DMD (or UTRN), DTNA and a number of syntrophins, such as SNTB1, SNTB2, SNTG1 and SNTG2, the transmembrane dystroglycan complex, and the sarcoglycan-sarcospan complex. Interacts with DAG1 (betaDAG1) with DMD; the interaction is inhibited by phosphorylation on the PPXY motif of DAG1. Interacts with SYNM; SNTA1 and SNTB1. Interacts with CMYA5. Directly interacts with ANK2 and ANK3; these interactions do not interfere with betaDAG1-binding and are necessary for proper localization in muscle cells. Identified in a dystroglycan complex that contains at least PRX, DRP2, UTRN, DMD and DAG1. Interacts with DTNB. Interacts with PGM5; the interaction is direct. Interacts with NOS1; localizes NOS1 to sarcolemma in muscle cells. As to expression, detected in quadriceps muscle and in sciatic nerve (at protein level). Expressed in the sarcolemma of the soleus muscle (at protein level). Differentially expressed during skeletal muscle, heart, and brain development. Also expressed in retina.

It is found in the cell membrane. It localises to the sarcolemma. The protein resides in the cytoplasm. Its subcellular location is the cytoskeleton. The protein localises to the postsynaptic cell membrane. In terms of biological role, anchors the extracellular matrix to the cytoskeleton via F-actin. Ligand for dystroglycan. Component of the dystrophin-associated glycoprotein complex which accumulates at the neuromuscular junction (NMJ) and at a variety of synapses in the peripheral and central nervous systems and has a structural function in stabilizing the sarcolemma. Also implicated in signaling events and synaptic transmission. This Mus musculus (Mouse) protein is Dystrophin (Dmd).